Here is a 382-residue protein sequence, read N- to C-terminus: Pentraxin-related protein PTX3 (382 aa).

An N-terminal signal peptide occupies residues 1 to 17; it reads MHISVILFCALWSAVSA. Residues 79 to 137 adopt a coiled-coil conformation; sequence VMLRGELQKLQAELGRLEGSLQKLCGPEAPSETRLARALDDLLQASRDAGRRLARLEDA. Intrachain disulfides connect Cys-180-Cys-358 and Cys-211-Cys-272. A Pentraxin (PTX) domain is found at 180–382; that stretch reads CETAILFPMR…QPHGGAQYVY (203 aa). N-linked (GlcNAc...) asparagine glycosylation is present at Asn-221.

In terms of assembly, homooctamer; disulfide-linked. Binds to C1q.

It is found in the secreted. Its function is as follows. Plays a role in the regulation of innate resistance to pathogens, inflammatory reactions, possibly clearance of self-components and female fertility. The protein is Pentraxin-related protein PTX3 (PTX3) of Bos taurus (Bovine).